The sequence spans 191 residues: C-type lectin domain family 2 member D (191 aa).

The Cytoplasmic portion of the chain corresponds to M1–L38. The helical; Signal-anchor for type II membrane protein transmembrane segment at F39–I59 threads the bilayer. Residues R60–V191 lie on the Extracellular side of the membrane. C75 and C86 are joined by a disulfide. Positions F82–S185 constitute a C-type lectin domain. Residues N95 and N147 are each glycosylated (N-linked (GlcNAc...) asparagine). Cysteines 103 and 184 form a disulfide.

As to quaternary structure, homodimer; disulfide-linked. Post-translationally, N-glycosylated. Detected in peripheral blood leukocytes, osteoblasts, lymph node, thymus and spleen. Isoform 1, isoform 2 and isoform 4 are expressed in T- and B-lymphocytes, and at lower levels in NK cells. They are also expressed in B-cell lines and LPS-matured monocyte-derived dendritic cells.

Its subcellular location is the cell membrane. It is found in the endoplasmic reticulum. Functionally, receptor for KLRB1 that protects target cells against natural killer cell-mediated lysis. Inhibits osteoclast formation. Inhibits bone resorption. Modulates the release of interferon-gamma. Binds high molecular weight sulfated glycosaminoglycans. This chain is C-type lectin domain family 2 member D (CLEC2D), found in Homo sapiens (Human).